Reading from the N-terminus, the 485-residue chain is MHTKTLKELSALLHSKQISATELAQLFLDRIAQSDLNAFLHVDPALTLKEAALADQRLASGDTTVLTGIPIAHKDIFVTRDWRSTAGSKMLENYVSPFDATVVEQFKQAGMVHLGKLNCDEFAMGSSNENSYFGAVKNPWDKAAIPGGSSGGSAAAIAARLTPASTATDTGGSIRQPAALCGVTGIKPTYGSVSRFGMIAFASSLDQGGPIAKTAEDCGLLLNAMTGFDPRDSTSIERDKEDFTRDLNQPLQGLKIGLPREYFGAGLAADVEQAVRAALKEYEKLGATLVDISLPKTELSIPTYYVIAPAEASSNLSRFDGVRYGYRAKDYTDLSDMYRKTRAEGFGEEVKRRILVGAYVLSHGYYDAYYLQAQKIRRLIAQDFQQAFTQCDVIMGPVCPTVAWDLGDKADDPIANYLADIFTLSTSLAGLPGMSIPCGFGQGEKNSKRPVGLQIIGNYFAEAKLLNVAHQYQQATDWHLRQPAE.

Active-site charge relay system residues include Lys-74 and Ser-149. The active-site Acyl-ester intermediate is the Ser-173.

The protein belongs to the amidase family. GatA subfamily. In terms of assembly, heterotrimer of A, B and C subunits.

It carries out the reaction L-glutamyl-tRNA(Gln) + L-glutamine + ATP + H2O = L-glutaminyl-tRNA(Gln) + L-glutamate + ADP + phosphate + H(+). Functionally, allows the formation of correctly charged Gln-tRNA(Gln) through the transamidation of misacylated Glu-tRNA(Gln) in organisms which lack glutaminyl-tRNA synthetase. The reaction takes place in the presence of glutamine and ATP through an activated gamma-phospho-Glu-tRNA(Gln). This chain is Glutamyl-tRNA(Gln) amidotransferase subunit A, found in Janthinobacterium sp. (strain Marseille) (Minibacterium massiliensis).